The primary structure comprises 460 residues: Chromosomal replication initiator protein DnaA (460 aa).

Residues 1-91 (MSLINPKVSA…LLWQNEDKSI (91 aa)) are domain I, interacts with DnaA modulators. Residues 91-122 (ICSIDIQVTEEKNSSSSIISKNKEESVNNLGS) are domain II. The interval 123–342 (PLDPRFTFDN…GALNKVAHTS (220 aa)) is domain III, AAA+ region. Glycine 169, glycine 171, lysine 172, and threonine 173 together coordinate ATP. The interval 343 to 460 (LIGRSMTVES…EINQLRKMFK (118 aa)) is domain IV, binds dsDNA.

The protein belongs to the DnaA family. Oligomerizes as a right-handed, spiral filament on DNA at oriC.

It is found in the cytoplasm. Functionally, plays an essential role in the initiation and regulation of chromosomal replication. ATP-DnaA binds to the origin of replication (oriC) to initiate formation of the DNA replication initiation complex once per cell cycle. Binds the DnaA box (a 9 base pair repeat at the origin) and separates the double-stranded (ds)DNA. Forms a right-handed helical filament on oriC DNA; dsDNA binds to the exterior of the filament while single-stranded (ss)DNA is stabiized in the filament's interior. The ATP-DnaA-oriC complex binds and stabilizes one strand of the AT-rich DNA unwinding element (DUE), permitting loading of DNA polymerase. After initiation quickly degrades to an ADP-DnaA complex that is not apt for DNA replication. Binds acidic phospholipids. The polypeptide is Chromosomal replication initiator protein DnaA (Wolbachia sp. subsp. Brugia malayi (strain TRS)).